The chain runs to 376 residues: MYVFGIFAVMIAVGALIGAVTNHFAIKMLFRPYKAIYIFGKRVPFTPGLIPKRRDELARQMGQMVTGHLLTTEGLKKRLASDAVKSQAVQVGERLLARLSQSTATVEEALESIGISNPAQKADRAVSRLADEKLTAFLEAYENEPLKKLFPLEAQEKLKEKIPMVSSYILSRAVSYFESDEGKERLGHMIDDFLKERGMLGSMVQMFLGNSSLVDRVQPEIVKFLKNGETAGLLQDLLENEWDKLKEYTFKEADDKWNLKPLIFDLKEKLLKRFSLQPFFEKTIGSSISSFEQDIALRLPQMADRLLEEAGRRLDQALKQLELEQIVKEQVDNFPVERLEEMVLSISKREFKMITYLGGLLGGIIGAVQAIFVILI.

The next 2 helical transmembrane spans lie at 1–21 (MYVF…GAVT) and 356–376 (YLGG…VILI).

This sequence belongs to the UPF0754 family.

The protein localises to the cell membrane. The sequence is that of UPF0754 membrane protein BLi01057/BL02871 from Bacillus licheniformis (strain ATCC 14580 / DSM 13 / JCM 2505 / CCUG 7422 / NBRC 12200 / NCIMB 9375 / NCTC 10341 / NRRL NRS-1264 / Gibson 46).